Consider the following 715-residue polypeptide: Polyribonucleotide nucleotidyltransferase (715 aa).

Residues Asp-488 and Asp-494 each coordinate Mg(2+). A KH domain is found at 555-614 (PRIEVMHIPTDKIRDVIGSGGKVIREIVEKTGAKINIEDDGTVKIASSNAKEIEAAKKWI). In terms of domain architecture, S1 motif spans 624 to 692 (GEIYEGTVVK…ERGKVRLSMK (69 aa)).

This sequence belongs to the polyribonucleotide nucleotidyltransferase family. Requires Mg(2+) as cofactor.

The protein resides in the cytoplasm. The enzyme catalyses RNA(n+1) + phosphate = RNA(n) + a ribonucleoside 5'-diphosphate. Its function is as follows. Involved in mRNA degradation. Catalyzes the phosphorolysis of single-stranded polyribonucleotides processively in the 3'- to 5'-direction. The sequence is that of Polyribonucleotide nucleotidyltransferase from Mesorhizobium japonicum (strain LMG 29417 / CECT 9101 / MAFF 303099) (Mesorhizobium loti (strain MAFF 303099)).